A 321-amino-acid polypeptide reads, in one-letter code: MNRPERLQPGVKLRDADKVSRIPVKIVPSERDTMLRKPDWLRVKLPASNQRILDIKQALRSNGLHSVCEEASCPNLAECFNHGTATFMILGAICTRRCPFCDVAHGRPLKPDAEEPVKLAQTIRDMKLKYVVITSVDRDDLRDGGAQHFADCIREIRKLNPAIKIEILVPDFRGRIDAALDILATEPPDVFNHNLETAPMHYRKARPGANYQWSLDLLKRFKERHPNVPTKSGLMMGLGETNEEIAQVLRDLREHKVEMLTLGQYLQPSKFHLPVERYVPPAEFDELKALADELGFTHAACGPLVRSSYHADLQAQGKEVK.

Residues Cys-68, Cys-73, Cys-79, Cys-94, Cys-98, Cys-101, and Ser-308 each coordinate [4Fe-4S] cluster. The 218-residue stretch at 80–297 (FNHGTATFMI…KALADELGFT (218 aa)) folds into the Radical SAM core domain.

This sequence belongs to the radical SAM superfamily. Lipoyl synthase family. It depends on [4Fe-4S] cluster as a cofactor.

The protein localises to the cytoplasm. It carries out the reaction [[Fe-S] cluster scaffold protein carrying a second [4Fe-4S](2+) cluster] + N(6)-octanoyl-L-lysyl-[protein] + 2 oxidized [2Fe-2S]-[ferredoxin] + 2 S-adenosyl-L-methionine + 4 H(+) = [[Fe-S] cluster scaffold protein] + N(6)-[(R)-dihydrolipoyl]-L-lysyl-[protein] + 4 Fe(3+) + 2 hydrogen sulfide + 2 5'-deoxyadenosine + 2 L-methionine + 2 reduced [2Fe-2S]-[ferredoxin]. It functions in the pathway protein modification; protein lipoylation via endogenous pathway; protein N(6)-(lipoyl)lysine from octanoyl-[acyl-carrier-protein]: step 2/2. Its function is as follows. Catalyzes the radical-mediated insertion of two sulfur atoms into the C-6 and C-8 positions of the octanoyl moiety bound to the lipoyl domains of lipoate-dependent enzymes, thereby converting the octanoylated domains into lipoylated derivatives. This is Lipoyl synthase from Shewanella putrefaciens (strain CN-32 / ATCC BAA-453).